A 297-amino-acid chain; its full sequence is Phosphatidylglycerol--prolipoprotein diacylglyceryl transferase (297 aa).

A run of 4 helical transmembrane segments spans residues 20 to 40 (FLTI…GLFV), 50 to 70 (INPL…IIGA), 105 to 125 (AVWE…LSII), and 133 to 153 (IHLK…QSIG). Residue Arg154 participates in a 1,2-diacyl-sn-glycero-3-phospho-(1'-sn-glycerol) binding. 3 helical membrane-spanning segments follow: residues 193–213 (PTFL…IFVF), 225–245 (GFIS…IEGL), and 266–286 (AQFI…FLRL).

Belongs to the Lgt family.

It is found in the cell inner membrane. The catalysed reaction is L-cysteinyl-[prolipoprotein] + a 1,2-diacyl-sn-glycero-3-phospho-(1'-sn-glycerol) = an S-1,2-diacyl-sn-glyceryl-L-cysteinyl-[prolipoprotein] + sn-glycerol 1-phosphate + H(+). Its pathway is protein modification; lipoprotein biosynthesis (diacylglyceryl transfer). Its function is as follows. Catalyzes the transfer of the diacylglyceryl group from phosphatidylglycerol to the sulfhydryl group of the N-terminal cysteine of a prolipoprotein, the first step in the formation of mature lipoproteins. The chain is Phosphatidylglycerol--prolipoprotein diacylglyceryl transferase from Prochlorococcus marinus (strain MIT 9312).